Here is a 27-residue protein sequence, read N- to C-terminus: Delta-actitoxin-Avd2a (27 aa).

Disulfide bonds link Cys-3/Cys-17, Cys-4/Cys-11, and Cys-6/Cys-22.

Belongs to the sea anemone short toxin (type III) family.

It localises to the secreted. The protein resides in the nematocyst. Functionally, specific arthropod (crab and insect) toxin that inhibits inactivation of voltage-gated sodium channels. It competes well with the site-3 toxin LqhalphaIT (from the scorpion L.quinquestriatus (AC P17728)) on binding to cockroach neuronal membranes (Ki=21.4 nM), and inhibits the inactivation of D.melanogaster channel (DmNav1), but not that of mammalian Navs expressed in Xenopus oocytes. Its activity is synergically enhanced by ligands of receptor site-4 (Bj-xtrIT (AC P56637)). Its ability to inhibit the channel mutant DmNav1[D1701R] only decreases 5-fold, whereas the inhibition activity is completely lost by LqhalphaIT and Av2 when tested on DmNav1[D1701R]. The polypeptide is Delta-actitoxin-Avd2a (Anemonia sulcata (Mediterranean snakelocks sea anemone)).